The primary structure comprises 73 residues: UPF0154 protein MYCGA5700 (73 aa).

Residues 5 to 25 (LALGLSIPLCLIVGAFVGYFV) traverse the membrane as a helical segment.

Belongs to the UPF0154 family.

The protein resides in the membrane. In Mycoplasmoides gallisepticum (strain R(low / passage 15 / clone 2)) (Mycoplasma gallisepticum), this protein is UPF0154 protein MYCGA5700.